The primary structure comprises 161 residues: Ubiquitin-conjugating enzyme E2Q-like protein 1 (161 aa).

The UBC core domain occupies 1 to 154 (MKELQDIARL…VKTHEKYGWV (154 aa)). The active-site Glycyl thioester intermediate is C88.

The protein belongs to the ubiquitin-conjugating enzyme family. In terms of assembly, interacts with FBXW7.

The protein resides in the nucleus. It catalyses the reaction S-ubiquitinyl-[E1 ubiquitin-activating enzyme]-L-cysteine + [E2 ubiquitin-conjugating enzyme]-L-cysteine = [E1 ubiquitin-activating enzyme]-L-cysteine + S-ubiquitinyl-[E2 ubiquitin-conjugating enzyme]-L-cysteine.. It functions in the pathway protein modification; protein ubiquitination. Functionally, probable E2 ubiquitin-protein ligase that catalyzes the covalent attachment of ubiquitin to target proteins. May facilitate the monoubiquitination and degradation of MTOR and CCNE1 through interaction with FBXW7. This is Ubiquitin-conjugating enzyme E2Q-like protein 1 (UBE2QL1) from Homo sapiens (Human).